A 91-amino-acid polypeptide reads, in one-letter code: Acylphosphatase (91 aa).

The 89-residue stretch at 3–91 (KLRMNVQGRV…EETEQFKVIQ (89 aa)) folds into the Acylphosphatase-like domain. Residues Arg18 and Asn36 contribute to the active site.

The protein belongs to the acylphosphatase family.

The catalysed reaction is an acyl phosphate + H2O = a carboxylate + phosphate + H(+). In Enterococcus faecalis (strain ATCC 700802 / V583), this protein is Acylphosphatase (acyP).